The sequence spans 904 residues: Eukaryotic translation initiation factor 3 subunit C (904 aa).

Disordered regions lie at residues 1 to 38 (MSRF…EEED) and 156 to 290 (FRES…TSEK). Positions 22–32 (IQRQTAPQFTF) are enriched in polar residues. Acidic residues predominate over residues 161 to 183 (DAADDEDEEEEKKEEEESDDEEA). Residues 194 to 206 (FKKDTVEKVKVEK) show a composition bias toward basic and acidic residues. Residues 207-232 (DDDDSDDSIDWGQDSDSDESSSEEEA) show a composition bias toward acidic residues. Residues 237–247 (IRERFLKRPEK) are compositionally biased toward basic and acidic residues. Positions 257 to 272 (KEKKKTKETKDSRKKK) are enriched in basic residues. One can recognise a PCI domain in the interval 636 to 812 (FHMHINLELL…ETVVLHRSEP (177 aa)). The disordered stretch occupies residues 847-904 (RGGNQGYNRDRQNYRNQNQNRENWNNNRRQDRGNRNRNQNRDREQREQHRVEFEEKAE). Positions 860–873 (YRNQNQNRENWNNN) are enriched in low complexity. Positions 874-904 (RRQDRGNRNRNQNRDREQREQHRVEFEEKAE) are enriched in basic and acidic residues.

Belongs to the eIF-3 subunit C family. As to quaternary structure, component of the eukaryotic translation initiation factor 3 (eIF-3) complex.

It localises to the cytoplasm. Functionally, component of the eukaryotic translation initiation factor 3 (eIF-3) complex, which is involved in protein synthesis of a specialized repertoire of mRNAs and, together with other initiation factors, stimulates binding of mRNA and methionyl-tRNAi to the 40S ribosome. The eIF-3 complex specifically targets and initiates translation of a subset of mRNAs involved in cell proliferation. In Culex quinquefasciatus (Southern house mosquito), this protein is Eukaryotic translation initiation factor 3 subunit C.